The following is a 224-amino-acid chain: Thymidine kinase (224 aa).

ATP-binding positions include 19 to 26 (GPMFAGKT) and 93 to 96 (DEVQ). E94 acts as the Proton acceptor in catalysis. Zn(2+)-binding residues include C150, C153, C188, and H191.

It belongs to the thymidine kinase family. Homotetramer.

Its subcellular location is the cytoplasm. The catalysed reaction is thymidine + ATP = dTMP + ADP + H(+). The chain is Thymidine kinase from Mycoplasmoides gallisepticum (strain R(low / passage 15 / clone 2)) (Mycoplasma gallisepticum).